Here is a 418-residue protein sequence, read N- to C-terminus: Gamma-glutamyl phosphate reductase (418 aa).

The protein belongs to the gamma-glutamyl phosphate reductase family.

The protein localises to the cytoplasm. It catalyses the reaction L-glutamate 5-semialdehyde + phosphate + NADP(+) = L-glutamyl 5-phosphate + NADPH + H(+). Its pathway is amino-acid biosynthesis; L-proline biosynthesis; L-glutamate 5-semialdehyde from L-glutamate: step 2/2. Catalyzes the NADPH-dependent reduction of L-glutamate 5-phosphate into L-glutamate 5-semialdehyde and phosphate. The product spontaneously undergoes cyclization to form 1-pyrroline-5-carboxylate. In Marinobacter nauticus (strain ATCC 700491 / DSM 11845 / VT8) (Marinobacter aquaeolei), this protein is Gamma-glutamyl phosphate reductase.